Here is a 246-residue protein sequence, read N- to C-terminus: tRNA (guanine-N(1)-)-methyltransferase (246 aa).

Gly114 provides a ligand contact to S-adenosyl-L-methionine.

Belongs to the RNA methyltransferase TrmD family. In terms of assembly, homodimer.

The protein resides in the cytoplasm. It carries out the reaction guanosine(37) in tRNA + S-adenosyl-L-methionine = N(1)-methylguanosine(37) in tRNA + S-adenosyl-L-homocysteine + H(+). In terms of biological role, specifically methylates guanosine-37 in various tRNAs. The sequence is that of tRNA (guanine-N(1)-)-methyltransferase from Novosphingobium aromaticivorans (strain ATCC 700278 / DSM 12444 / CCUG 56034 / CIP 105152 / NBRC 16084 / F199).